A 195-amino-acid chain; its full sequence is 3-isopropylmalate dehydratase small subunit (195 aa).

This sequence belongs to the LeuD family. LeuD type 1 subfamily. As to quaternary structure, heterodimer of LeuC and LeuD.

It carries out the reaction (2R,3S)-3-isopropylmalate = (2S)-2-isopropylmalate. It functions in the pathway amino-acid biosynthesis; L-leucine biosynthesis; L-leucine from 3-methyl-2-oxobutanoate: step 2/4. In terms of biological role, catalyzes the isomerization between 2-isopropylmalate and 3-isopropylmalate, via the formation of 2-isopropylmaleate. This Thermobifida fusca (strain YX) protein is 3-isopropylmalate dehydratase small subunit.